The following is a 127-amino-acid chain: Small ribosomal subunit protein uS11 (127 aa).

It belongs to the universal ribosomal protein uS11 family. As to quaternary structure, part of the 30S ribosomal subunit. Interacts with proteins S7 and S18. Binds to IF-3.

In terms of biological role, located on the platform of the 30S subunit, it bridges several disparate RNA helices of the 16S rRNA. Forms part of the Shine-Dalgarno cleft in the 70S ribosome. This chain is Small ribosomal subunit protein uS11, found in Chlorobium chlorochromatii (strain CaD3).